Consider the following 220-residue polypeptide: Ribosomal RNA large subunit methyltransferase E (220 aa).

Gly60, Trp62, Asp92, Asp108, and Asp133 together coordinate S-adenosyl-L-methionine. Catalysis depends on Lys173, which acts as the Proton acceptor.

The protein belongs to the class I-like SAM-binding methyltransferase superfamily. RNA methyltransferase RlmE family.

The protein localises to the cytoplasm. It carries out the reaction uridine(2552) in 23S rRNA + S-adenosyl-L-methionine = 2'-O-methyluridine(2552) in 23S rRNA + S-adenosyl-L-homocysteine + H(+). Specifically methylates the uridine in position 2552 of 23S rRNA at the 2'-O position of the ribose in the fully assembled 50S ribosomal subunit. The chain is Ribosomal RNA large subunit methyltransferase E from Burkholderia thailandensis (strain ATCC 700388 / DSM 13276 / CCUG 48851 / CIP 106301 / E264).